The following is a 1138-amino-acid chain: Ras guanine nucleotide exchange factor N (1138 aa).

LRR repeat units lie at residues 1-16 (MSYN…ITQL), 18-39 (HLKS…SYFG), and 43-64 (TLQK…FYLL). Disordered regions lie at residues 126–180 (ALKN…SNNN), 239–301 (FNSE…GSRK), 319–360 (NKTH…SDTN), 389–411 (IDSP…SPPQ), 473–540 (GSPT…NNNN), 601–643 (ATTV…TSGS), and 660–680 (MSDV…SQSG). The span at 140–158 (KTKGLHSSSSNINTSNNIT) shows a compositional bias: low complexity. The span at 263-275 (RAQTISGKQPSII) shows a compositional bias: polar residues. The span at 283 to 299 (SGGGSGNNNNSGGGGGS) shows a compositional bias: gly residues. Positions 326–352 (GHSSSSQSNSTTNTPSISSTPYPTSTI) are enriched in low complexity. A compositionally biased stretch (basic and acidic residues) spans 393–405 (RTLERRNSSRDDI). The segment covering 487 to 496 (PQHPPPPPPI) has biased composition (pro residues). The segment covering 498-511 (DNNQPKLNQSQNLI) has biased composition (polar residues). 2 stretches are compositionally biased toward low complexity: residues 512–540 (NTNS…NNNN) and 605–634 (NSNS…NSPQ). Residues 733 to 855 (GVPKVKNITL…LLLNIINMKR (123 aa)) form the N-terminal Ras-GEF domain. The Ras-GEF domain occupies 891 to 1118 (RPHEIARQLT…YSEASKIEEK (228 aa)).

In terms of biological role, promotes the exchange of Ras-bound GDP by GTP. May play a role in chemotaxis. This Dictyostelium discoideum (Social amoeba) protein is Ras guanine nucleotide exchange factor N (gefN).